Here is a 163-residue protein sequence, read N- to C-terminus: Nucleotide-binding protein Spro_1084 (163 aa).

Belongs to the YajQ family.

Nucleotide-binding protein. The sequence is that of Nucleotide-binding protein Spro_1084 from Serratia proteamaculans (strain 568).